Here is a 403-residue protein sequence, read N- to C-terminus: Na(+)/H(+) antiporter NhaA (403 aa).

Transmembrane regions (helical) follow at residues 25 to 45 (IAGL…NSPF), 70 to 90 (LILW…GLEI), 105 to 125 (IALP…IFLA), 136 to 156 (GWAV…AMLG), 165 to 185 (VFLT…IALA), 188 to 208 (EGLS…LIVL), 213 to 233 (VASL…VLES), 234 to 254 (GVHS…RVSG), 269 to 289 (VALL…LGGV), 302 to 322 (IILG…GLAV), 340 to 360 (GAAL…GLAF), and 369 to 389 (VNLA…VVLA).

The protein belongs to the NhaA Na(+)/H(+) (TC 2.A.33) antiporter family.

It is found in the cell inner membrane. It catalyses the reaction Na(+)(in) + 2 H(+)(out) = Na(+)(out) + 2 H(+)(in). Functionally, na(+)/H(+) antiporter that extrudes sodium in exchange for external protons. In Maricaulis maris (strain MCS10) (Caulobacter maris), this protein is Na(+)/H(+) antiporter NhaA.